A 636-amino-acid polypeptide reads, in one-letter code: Transcription termination factor FttA (636 aa).

The segment at 4–72 is KHa; the sequence is ELELKRIRDE…VVFRWNVDKR (69 aa). The interval 73-140 is KHb; that stretch reads KDPAETKDYI…WQPKTIRTPP (68 aa). Residues 181–383 are metallo-beta-lactamase N-terminus; sequence NIRMNALGGF…LLIEATYGGP (203 aa). The Zn(2+) site is built by His242, His244, Asp246, His247, His329, and Asp352. The tract at residues 384-577 is beta-Casp; sequence QDRIPSRQES…LKVFTLEGFS (194 aa). A metallo-beta-lactamase C-terminus region spans residues 578–636; sequence GHSSRSQISQFLRRIQPRPKVVIVNHGEESKCVSLSTMIHKKLRKSTKSPKNLEVVLLK. Residue His603 participates in Zn(2+) binding.

This sequence belongs to the metallo-beta-lactamase superfamily. RNA-metabolizing metallo-beta-lactamase-like family. FttA subfamily. Homodimer. Interacts with RNA polymerase (RNAP), interacts with the Spt4-Spt5 complex. The cofactor is Zn(2+).

Functionally, terminates transcription on the whole genome. Termination is linked to FttA-mediated RNA cleavage and does not require NTP hydrolysis. Cleaves endonucleolytically at the RNA exit channel of RNA polymerase (RNAP); the 5'-3' exonuclease activity of this protein degrades the nascent RNA released from RNAP. In terms of biological role, terminates transcription genome-wide in M.maripaludis. Restores wild-type growth to a strain of Methanococcus maripaludis depleted for this gene at 22 degrees Celsius and prevents transcriptional read-through. Transcription termination is most effective in vivo on RNAs with more than one U4-tract in their 3'-ends. Has endonuclease activity after U-rich tracts in transcription termination sequences. The polypeptide is Transcription termination factor FttA (Lokiarchaeum sp. (strain GC14_75)).